A 205-amino-acid chain; its full sequence is Octanoyltransferase (205 aa).

The BPL/LPL catalytic domain maps to 30–205; that stretch reads NSSDELVWLL…ILKKEFYKIF (176 aa). Residues 68–75, 140–142, and 153–155 each bind substrate; these read RGGKYTYH, AFG, and GIA. Cys171 functions as the Acyl-thioester intermediate in the catalytic mechanism.

The protein belongs to the LipB family.

Its subcellular location is the cytoplasm. The enzyme catalyses octanoyl-[ACP] + L-lysyl-[protein] = N(6)-octanoyl-L-lysyl-[protein] + holo-[ACP] + H(+). It functions in the pathway protein modification; protein lipoylation via endogenous pathway; protein N(6)-(lipoyl)lysine from octanoyl-[acyl-carrier-protein]: step 1/2. Functionally, catalyzes the transfer of endogenously produced octanoic acid from octanoyl-acyl-carrier-protein onto the lipoyl domains of lipoate-dependent enzymes. Lipoyl-ACP can also act as a substrate although octanoyl-ACP is likely to be the physiological substrate. This is Octanoyltransferase from Wolbachia sp. subsp. Brugia malayi (strain TRS).